A 92-amino-acid polypeptide reads, in one-letter code: MAKGQSLQDPFLNALRRERVPVSVYLVNGIKLQGTIESFDQFVVLLRNTVSQMVYKHAISTVVPARNVRVGPGGGYVQSNEGNQAEDDDVEQ.

Residues 9-68 enclose the Sm domain; the sequence is DPFLNALRRERVPVSVYLVNGIKLQGTIESFDQFVVLLRNTVSQMVYKHAISTVVPARNV. Positions 73 to 92 are disordered; the sequence is GGGYVQSNEGNQAEDDDVEQ.

The protein belongs to the Hfq family. Homohexamer.

In terms of biological role, RNA chaperone that binds small regulatory RNA (sRNAs) and mRNAs to facilitate mRNA translational regulation in response to envelope stress, environmental stress and changes in metabolite concentrations. Also binds with high specificity to tRNAs. The polypeptide is RNA-binding protein Hfq (Xanthomonas axonopodis pv. citri (strain 306)).